A 334-amino-acid polypeptide reads, in one-letter code: F-box only protein 16 (334 aa).

The region spanning 86–132 (LDFTTKLPRVLSVYIFSFLDPRSLCRCAQVSWYWKSLAELDQLWMLK) is the F-box domain. Disordered regions lie at residues 168–222 (PKTP…WRSS) and 314–334 (LEHL…QSQS). The segment covering 194–204 (SPSLAFRSSSS) has biased composition (low complexity). Over residues 210-222 (NPGEKELPPWRSS) the composition is skewed to basic and acidic residues. Residues 323-334 (LQSPSPRLQSQS) show a composition bias toward low complexity.

In terms of assembly, part of a SCF (SKP1-cullin-F-box) protein ligase complex.

Its function is as follows. Probably recognizes and binds to some phosphorylated proteins and promotes their ubiquitination and degradation. This is F-box only protein 16 (Fbxo16) from Mus musculus (Mouse).